Here is a 658-residue protein sequence, read N- to C-terminus: Putative arrestin-related trafficking adapter C2D10.04 (658 aa).

2 disordered regions span residues 21-107 (LHHQ…LTWS) and 638-658 (REEA…EIPR). Over residues 39–81 (NRSSNSGLNRRNSVFGLPSSGLSSRLSKPSLSSINNSNNSSSN) the composition is skewed to low complexity. Residues 96–107 (RNMSNKPPLTWS) show a composition bias toward polar residues. Position 653 is a phosphoserine (S653).

This sequence belongs to the ALY1 family.

The protein localises to the cytoplasm. Functionally, may regulate endocytosis in response to extracellular stimuli. The sequence is that of Putative arrestin-related trafficking adapter C2D10.04 from Schizosaccharomyces pombe (strain 972 / ATCC 24843) (Fission yeast).